The sequence spans 280 residues: MAAAINAAVPSPPVAPSAPPPPPPPLGQASDRFPSLVLELVFSYLDLPDLRSCGLVCKRWYRCLHGDKNSDVWRSLCCRIVSEEALRTDILCNLRTYKAKVRAFQHGLSSSDCSRNVFIKKNGFTLHRNPIAQSTDGARTKIGFSEGRHAWEVWWEGPLGTVAVIGIATKQAPMQCQGYVALLGSDDQSWGWNLVDNNLLHNGEVNGSFPQCNNAPKYQIGERIRVILDMEDKTLAFERGYEYLGVAFRGLPKACLYPAVSAVYGNTEVTLVYLGKPLDG.

The disordered stretch occupies residues 1–28 (MAAAINAAVPSPPVAPSAPPPPPPPLGQ). The span at 10–26 (PSPPVAPSAPPPPPPPL) shows a compositional bias: pro residues. The region spanning 27–76 (GQASDRFPSLVLELVFSYLDLPDLRSCGLVCKRWYRCLHGDKNSDVWRSL) is the F-box domain. One can recognise a B30.2/SPRY domain in the interval 86-278 (LRTDILCNLR…VTLVYLGKPL (193 aa)).

It belongs to the FBXO45/Fsn family. In terms of assembly, probable component of a E3 ubiquitin ligase complex.

It functions in the pathway protein modification; protein ubiquitination. The polypeptide is F-box/SPRY domain-containing protein 1 (fbxo45) (Xenopus laevis (African clawed frog)).